The sequence spans 810 residues: Interleukin-4 receptor subunit alpha (810 aa).

Positions 1–25 are cleaved as a signal peptide; it reads MGRLCTKFLTSVGCLILLLVTGSGS. Topologically, residues 26–233 are extracellular; the sequence is IKVLGEPTCF…NHFQLPLIQR (208 aa). Cys-34 and Cys-44 form a disulfide bridge. N-linked (GlcNAc...) asparagine glycosylation occurs at Asn-72. An intrachain disulfide couples Cys-75 to Cys-87. The Fibronectin type-III domain maps to 126–224; sequence APDNLTLHTN…EWSPSITWYN (99 aa). N-linked (GlcNAc...) asparagine glycans are attached at residues Asn-129, Asn-135, and Asn-163. A Phosphoserine modification is found at Ser-165. Residues 213–217 carry the WSXWS motif motif; sequence WSEWS. A helical transmembrane segment spans residues 234–257; the sequence is LPLGVTISCLCIPLFCLFCYFSIT. At 258–810 the chain is on the cytoplasmic side; sequence KIKKIWWDQI…PVGALGIAVS (553 aa). A Box 1 motif motif is present at residues 263-271; the sequence is WWDQIPTPA. The required for IRS1 activation and IL4-induced cell growth stretch occupies residues 441–557; it reads GSGQASVSWA…ESWEQILHMS (117 aa). A disordered region spans residues 460–482; it reads ATCQVTEQPSHPGPLSGSPAQSA. Tyr-500 carries the post-translational modification Phosphotyrosine. Residues 510 to 546 form a disordered region; it reads APNPGELAPEQQQADHLEEEEPPSPADPHSSGPPMQP. A required for IL4-induced gene expression region spans residues 557-653; that stretch reads SVLQHGAAAG…SSVPLFTFGL (97 aa). 3 positions are modified to phosphotyrosine: Tyr-575, Tyr-603, and Tyr-631. The tract at residues 586 to 672 is disordered; sequence AAQDPGVPGV…NSDPPKSPPE (87 aa). The span at 635–647 shows a compositional bias: low complexity; the sequence is QNPVPNQSPSSVP. Residues 707–712 carry the ITIM motif motif; sequence IVYSSL. Positions 766–810 are disordered; it reads PPEANLMSAPKTPSNLSGEGKGPGHSPVPSQTTEVPVGALGIAVS.

This sequence belongs to the type I cytokine receptor family. Type 4 subfamily. The functional IL4 receptor is formed by initial binding of IL4 to IL4R. Subsequent recruitment to the complex of the common gamma chain, in immune cells, creates a type I receptor and, in non-immune cells, of IL13RA1 forms a type II receptor. IL4R can also interact with the IL13/IL13RA1 complex to form a similar type II receptor. Interacts with the SH2-containing phosphatases, PTPN6/SHIP1, PTPN11/SHIP2 and INPP5D/SHIP. Interacts with JAK3. Interacts with PIK3C3. Interacts with JAK1 through a Box 1-containing region; inhibited by SOCS5. Interacts with SOCS5; inhibits IL4 signaling. Interacts with CLM1. Interacts with IL13RA2. On IL4 binding, phosphorylated on C-terminal tyrosine residues. In terms of processing, soluble IL4R can also be produced by proteolytic cleavage at the cell surface (shedding). In terms of tissue distribution, expressed in both Th1 and Th2 cells.

The protein resides in the cell membrane. The protein localises to the secreted. Functionally, receptor for both interleukin 4 and interleukin 13. Couples to the JAK1/2/3-STAT6 pathway. The IL4 response is involved in promoting Th2 differentiation. The IL4/IL13 responses are involved in regulating IgE production and, chemokine and mucus production at sites of allergic inflammation. In certain cell types, can signal through activation of insulin receptor substrates, IRS1/IRS2. This Mus musculus (Mouse) protein is Interleukin-4 receptor subunit alpha (Il4r).